The sequence spans 309 residues: Homoserine O-acetyltransferase (309 aa).

The active-site Acyl-thioester intermediate is Cys142. Substrate contacts are provided by Lys163 and Ser192. The active-site Proton acceptor is His235. The active site involves Glu237. Position 249 (Arg249) interacts with substrate.

Belongs to the MetA family.

It localises to the cytoplasm. It catalyses the reaction L-homoserine + acetyl-CoA = O-acetyl-L-homoserine + CoA. It functions in the pathway amino-acid biosynthesis; L-methionine biosynthesis via de novo pathway; O-acetyl-L-homoserine from L-homoserine: step 1/1. Its function is as follows. Transfers an acetyl group from acetyl-CoA to L-homoserine, forming acetyl-L-homoserine. The sequence is that of Homoserine O-acetyltransferase from Petrotoga mobilis (strain DSM 10674 / SJ95).